The chain runs to 207 residues: Ribosomal RNA small subunit methyltransferase G (207 aa).

S-adenosyl-L-methionine is bound by residues glycine 73, leucine 78, 124-125 (VE), and arginine 139.

The protein belongs to the methyltransferase superfamily. RNA methyltransferase RsmG family.

The protein resides in the cytoplasm. The enzyme catalyses guanosine(527) in 16S rRNA + S-adenosyl-L-methionine = N(7)-methylguanosine(527) in 16S rRNA + S-adenosyl-L-homocysteine. In terms of biological role, specifically methylates the N7 position of guanine in position 527 of 16S rRNA. This is Ribosomal RNA small subunit methyltransferase G from Klebsiella pneumoniae subsp. pneumoniae (strain ATCC 700721 / MGH 78578).